Consider the following 333-residue polypeptide: Oxidoreductase AN1596 (333 aa).

Belongs to the NmrA-type oxidoreductase family.

It functions in the pathway secondary metabolite biosynthesis; terpenoid biosynthesis. Oxidoreductase; part of the gene cluster that mediates the biosynthesis of the diterpene ent-pimara-8(14),15-diene (PD). Within the cluster, the HMG-CoA reductase AN1593 functions in the mevalonate pathway, which produces isoprenoid precursors. The geranylgeranyl pyrophosphate (GGPP) synthase AN1592 is needed in the formation of GGPP, the precursor for diterpenes. Lastly, the pimaradiene synthase pbcA performs the 2 cyclization steps that convert GGPP to ent-pimara-8(14),15-diene. The putative roles of the remaining cluster enzymes in ent-pimara-8(14),15-diene biosynthesis is unclear. The cytochrome P450 monooxygenase AN1598, the glutathione S-transferase AN1595, the oxidoreductases AN1596 and AN1597 probably function as decorative enzymes. It is possible that in biological conditions the compound is oxidized to ent-pimara-8(14),15-dien-19-oic acid, which is a bioactive diterpene compound predominant in many plant extracts. The sequence is that of Oxidoreductase AN1596 from Emericella nidulans (strain FGSC A4 / ATCC 38163 / CBS 112.46 / NRRL 194 / M139) (Aspergillus nidulans).